The primary structure comprises 380 residues: Erythronate-4-phosphate dehydrogenase (380 aa).

Positions 45 and 66 each coordinate substrate. Residues Asp146 and Thr174 each coordinate NAD(+). The active site involves Arg207. Asp231 is a binding site for NAD(+). Glu236 is a catalytic residue. His253 serves as the catalytic Proton donor. Gly256 lines the NAD(+) pocket. Tyr257 is a substrate binding site.

It belongs to the D-isomer specific 2-hydroxyacid dehydrogenase family. PdxB subfamily. As to quaternary structure, homodimer.

The protein localises to the cytoplasm. The enzyme catalyses 4-phospho-D-erythronate + NAD(+) = (R)-3-hydroxy-2-oxo-4-phosphooxybutanoate + NADH + H(+). Its pathway is cofactor biosynthesis; pyridoxine 5'-phosphate biosynthesis; pyridoxine 5'-phosphate from D-erythrose 4-phosphate: step 2/5. Its function is as follows. Catalyzes the oxidation of erythronate-4-phosphate to 3-hydroxy-2-oxo-4-phosphonooxybutanoate. The protein is Erythronate-4-phosphate dehydrogenase of Pseudomonas fluorescens (strain ATCC BAA-477 / NRRL B-23932 / Pf-5).